Here is a 208-residue protein sequence, read N- to C-terminus: Large ribosomal subunit protein uL4 (208 aa).

Positions 44 to 79 (QRQGTHKSKERSEISGSTRKLGRQKGGGGARRGDIN) are disordered.

The protein belongs to the universal ribosomal protein uL4 family. In terms of assembly, part of the 50S ribosomal subunit.

In terms of biological role, one of the primary rRNA binding proteins, this protein initially binds near the 5'-end of the 23S rRNA. It is important during the early stages of 50S assembly. It makes multiple contacts with different domains of the 23S rRNA in the assembled 50S subunit and ribosome. Forms part of the polypeptide exit tunnel. The sequence is that of Large ribosomal subunit protein uL4 from Phocaeicola vulgatus (strain ATCC 8482 / DSM 1447 / JCM 5826 / CCUG 4940 / NBRC 14291 / NCTC 11154) (Bacteroides vulgatus).